Here is a 423-residue protein sequence, read N- to C-terminus: Glycine-rich protein 1 (423 aa).

The N-terminal stretch at Met1–Ser20 is a signal peptide. 4 disordered regions span residues Thr28 to Ala47, Asp78 to Asn133, Lys159 to Ala219, and Gly236 to Gly288. The span at Ser31–Gly42 shows a compositional bias: low complexity. 2 stretches are compositionally biased toward basic and acidic residues: residues Asn81–Thr93 and Gln102–Asn111. Residues Lys159–Thr172 are compositionally biased toward gly residues. The span at Ser173–Ala183 shows a compositional bias: low complexity. Gly residues-rich tracts occupy residues Gly205–Ala219 and Gly236–Gln247. Positions Gly248–Gly284 are enriched in low complexity.

As to expression, nacreous layer of shell (at protein level).

It localises to the secreted. This chain is Glycine-rich protein 1, found in Pinctada maxima (Silver-lipped pearl oyster).